The chain runs to 448 residues: Carbon catabolite repressor protein 4 homolog 3 (448 aa).

The span at 50-67 (SSTSGPSDSNPESSSNRS) shows a compositional bias: low complexity. Residues 50-92 (SSTSGPSDSNPESSSNRSYSRRWQNPLPRRQHPDQIPSSQIAR) form a disordered region. Glutamate 162 contributes to the Mg(2+) binding site.

Belongs to the CCR4/nocturin family. Component of the CCR4-NOT complex, at least composed of CRR4 and CAF1 proteins. It depends on Mg(2+) as a cofactor.

Its subcellular location is the nucleus. The protein localises to the cytoplasm. The enzyme catalyses Exonucleolytic cleavage of poly(A) to 5'-AMP.. Functionally, acts as a catalytic component of the CCR4-NOT core complex, which in the nucleus seems to be a general transcription factor, and in the cytoplasm the major mRNA deadenylase involved in mRNA turnover. In Arabidopsis thaliana (Mouse-ear cress), this protein is Carbon catabolite repressor protein 4 homolog 3 (CCR4-3).